Consider the following 336-residue polypeptide: 4-hydroxy-2-oxovalerate aldolase (336 aa).

One can recognise a Pyruvate carboxyltransferase domain in the interval 4–254 (PRLTDTTLRD…NPGLDVLALM (251 aa)). Residue 12–13 (RD) coordinates substrate. Position 13 (Asp13) interacts with Mn(2+). His16 acts as the Proton acceptor in catalysis. Residues Ser166 and His193 each coordinate substrate. Mn(2+) is bound by residues His193 and His195. Residue Tyr284 coordinates substrate.

It belongs to the 4-hydroxy-2-oxovalerate aldolase family.

It carries out the reaction (S)-4-hydroxy-2-oxopentanoate = acetaldehyde + pyruvate. This Roseiflexus castenholzii (strain DSM 13941 / HLO8) protein is 4-hydroxy-2-oxovalerate aldolase.